The following is a 155-amino-acid chain: DNA gyrase inhibitor (155 aa).

This sequence belongs to the DNA gyrase inhibitor family. Interacts with DNA gyrase.

Its subcellular location is the cytoplasm. In terms of biological role, inhibits the supercoiling activity of DNA gyrase. Acts by inhibiting DNA gyrase at an early step, prior to (or at the step of) binding of DNA by the gyrase. It protects cells against toxins that target DNA gyrase, by inhibiting activity of these toxins and reducing the formation of lethal double-strand breaks in the cell. This chain is DNA gyrase inhibitor, found in Escherichia fergusonii (strain ATCC 35469 / DSM 13698 / CCUG 18766 / IAM 14443 / JCM 21226 / LMG 7866 / NBRC 102419 / NCTC 12128 / CDC 0568-73).